Here is a 96-residue protein sequence, read N- to C-terminus: Nucleoid-associated protein CF0672 (96 aa).

Belongs to the YbaB/EbfC family. Homodimer.

It localises to the cytoplasm. It is found in the nucleoid. Functionally, binds to DNA and alters its conformation. May be involved in regulation of gene expression, nucleoid organization and DNA protection. This Chlamydia felis (strain Fe/C-56) (Chlamydophila felis) protein is Nucleoid-associated protein CF0672.